A 186-amino-acid polypeptide reads, in one-letter code: TATA box-binding protein-like 1 (186 aa).

Belongs to the TBP family.

The protein localises to the cytoplasm. Its subcellular location is the nucleus. Its function is as follows. Part of a specialized transcription system that mediates the transcription of most ribosomal proteins through the 5'-TCT-3' motif which is a core promoter element at these genes. Seems to also mediate the transcription of NF1. Does not bind the TATA box. Members of the TBP family are differentially required to regulate transcription and development during early embryogenesis. Particularly regulates genes that have a role in catabolism. In Xenopus tropicalis (Western clawed frog), this protein is TATA box-binding protein-like 1 (tbpl1).